A 246-amino-acid polypeptide reads, in one-letter code: 23S rRNA (guanosine-2'-O-)-methyltransferase RlmB (246 aa).

Positions 197, 217, and 226 each coordinate S-adenosyl-L-methionine.

The protein belongs to the class IV-like SAM-binding methyltransferase superfamily. RNA methyltransferase TrmH family. RlmB subfamily.

The protein resides in the cytoplasm. The catalysed reaction is guanosine(2251) in 23S rRNA + S-adenosyl-L-methionine = 2'-O-methylguanosine(2251) in 23S rRNA + S-adenosyl-L-homocysteine + H(+). In terms of biological role, specifically methylates the ribose of guanosine 2251 in 23S rRNA. The sequence is that of 23S rRNA (guanosine-2'-O-)-methyltransferase RlmB from Haemophilus influenzae (strain ATCC 51907 / DSM 11121 / KW20 / Rd).